Consider the following 136-residue polypeptide: Large ribosomal subunit protein uL16 (136 aa).

The protein belongs to the universal ribosomal protein uL16 family. Part of the 50S ribosomal subunit.

In terms of biological role, binds 23S rRNA and is also seen to make contacts with the A and possibly P site tRNAs. This chain is Large ribosomal subunit protein uL16, found in Rickettsia bellii (strain OSU 85-389).